Reading from the N-terminus, the 367-residue chain is RNA-binding protein 48 (367 aa).

An RRM domain is found at 46–124 (QYLLIQGVPA…GLLHVCYAPE (79 aa)). Disordered regions lie at residues 217-243 (PVDR…HNDS), 280-302 (QLQE…QTNP), and 343-367 (SVPK…RRRI). Residues 347–357 (PPEDKPEDVHT) show a composition bias toward basic and acidic residues.

Belongs to the RBM48 family. Component of the minor spliceosome. Within this complex, interacts with ARMC7 and PRPF8/PRP8.

As a component of the minor spliceosome, involved in the splicing of U12-type introns in pre-mRNAs. The chain is RNA-binding protein 48 (RBM48) from Homo sapiens (Human).